We begin with the raw amino-acid sequence, 482 residues long: Retrovirus-related Pol polyprotein from type-1 retrotransposable element R2 (482 aa).

The Reverse transcriptase domain maps to 1 to 84 (AYADDLILFA…DYFKYLGSRY (84 aa)). A nucleic acid-binding endonuclease region spans residues 208–482 (QIPAVEKFYQ…ATGGRGRGDI (275 aa)).

The enzyme catalyses DNA(n) + a 2'-deoxyribonucleoside 5'-triphosphate = DNA(n+1) + diphosphate. The protein is Retrovirus-related Pol polyprotein from type-1 retrotransposable element R2 of Popillia japonica (Japanese beetle).